We begin with the raw amino-acid sequence, 115 residues long: MQQEPDRNEQGYCSSPPSSNKQDSSDDTKKIQRREKNRIAAQKSRQRQTQKADSLHIESENLERLNSALRGEISGLREELKYLTCVLSTHQPVCVLGPTKPQAILPHVGSTRYQH.

The interval 1–57 is disordered; that stretch reads MQQEPDRNEQGYCSSPPSSNKQDSSDDTKKIQRREKNRIAAQKSRQRQTQKADSLHI. Residues 27 to 90 enclose the bZIP domain; it reads DTKKIQRREK…KYLTCVLSTH (64 aa). Residues 29–51 form a basic motif region; it reads KKIQRREKNRIAAQKSRQRQTQK. The tract at residues 55–83 is leucine-zipper; it reads LHIESENLERLNSALRGEISGLREELKYL.

It belongs to the bZIP family.

Its subcellular location is the nucleus. It localises to the cytoplasm. In terms of biological role, AP-1 family transcription factor that controls the differentiation of lineage-specific cells in the immune system: specifically mediates the differentiation of T-helper 17 cells (Th17), follicular T-helper cells (TfH), CD8(+) dendritic cells and class-switch recombination (CSR) in B-cells. In Xenopus tropicalis (Western clawed frog), this protein is Basic leucine zipper transcriptional factor ATF-like (batf).